A 125-amino-acid chain; its full sequence is MAFPNTSAQQAETNSKSLEEIHTRKQLLAGGIMNLGLSNTNQMPAPQLLGQPSTTTATPDLVSTNSTPPRAAFNPSSSTTLGFFIPQDSYFGNSLIPVLPRLELPATPSTTTPPITPIANANNPK.

Positions 1 to 16 (MAFPNTSAQQAETNSK) are enriched in polar residues. Disordered regions lie at residues 1-20 (MAFPNTSAQQAETNSKSLEE), 38-74 (SNTNQMPAPQLLGQPSTTTATPDLVSTNSTPPRAAFN), and 105-125 (PATPSTTTPPITPIANANNPK).

The protein belongs to the SOSS-C family.

This Drosophila willistoni (Fruit fly) protein is SOSS complex subunit C homolog A.